We begin with the raw amino-acid sequence, 336 residues long: Ketol-acid reductoisomerase (NADP(+)) (336 aa).

Positions 1–181 constitute a KARI N-terminal Rossmann domain; it reads MNVYYDKDCN…GGGRTGIIET (181 aa). NADP(+)-binding positions include 24–27, Arg-47, Ser-50, Ser-52, and 82–85; these read YGSQ and DEFQ. Residue His-107 is part of the active site. Gly-133 serves as a coordination point for NADP(+). The KARI C-terminal knotted domain maps to 182 to 327; it reads TFQDETETDL…GKLRSMMPWI (146 aa). 4 residues coordinate Mg(2+): Asp-190, Glu-194, Glu-226, and Glu-230. Ser-251 provides a ligand contact to substrate.

It belongs to the ketol-acid reductoisomerase family. Mg(2+) is required as a cofactor.

The enzyme catalyses (2R)-2,3-dihydroxy-3-methylbutanoate + NADP(+) = (2S)-2-acetolactate + NADPH + H(+). The catalysed reaction is (2R,3R)-2,3-dihydroxy-3-methylpentanoate + NADP(+) = (S)-2-ethyl-2-hydroxy-3-oxobutanoate + NADPH + H(+). It participates in amino-acid biosynthesis; L-isoleucine biosynthesis; L-isoleucine from 2-oxobutanoate: step 2/4. The protein operates within amino-acid biosynthesis; L-valine biosynthesis; L-valine from pyruvate: step 2/4. Involved in the biosynthesis of branched-chain amino acids (BCAA). Catalyzes an alkyl-migration followed by a ketol-acid reduction of (S)-2-acetolactate (S2AL) to yield (R)-2,3-dihydroxy-isovalerate. In the isomerase reaction, S2AL is rearranged via a Mg-dependent methyl migration to produce 3-hydroxy-3-methyl-2-ketobutyrate (HMKB). In the reductase reaction, this 2-ketoacid undergoes a metal-dependent reduction by NADPH to yield (R)-2,3-dihydroxy-isovalerate. The polypeptide is Ketol-acid reductoisomerase (NADP(+)) (Geotalea daltonii (strain DSM 22248 / JCM 15807 / FRC-32) (Geobacter daltonii)).